The primary structure comprises 181 residues: Adenine phosphoribosyltransferase (181 aa).

Belongs to the purine/pyrimidine phosphoribosyltransferase family. In terms of assembly, homodimer.

The protein localises to the cytoplasm. It carries out the reaction AMP + diphosphate = 5-phospho-alpha-D-ribose 1-diphosphate + adenine. Its pathway is purine metabolism; AMP biosynthesis via salvage pathway; AMP from adenine: step 1/1. Its function is as follows. Catalyzes a salvage reaction resulting in the formation of AMP, that is energically less costly than de novo synthesis. This is Adenine phosphoribosyltransferase from Colwellia psychrerythraea (strain 34H / ATCC BAA-681) (Vibrio psychroerythus).